A 150-amino-acid polypeptide reads, in one-letter code: Phylloplanin (150 aa).

An N-terminal signal peptide occupies residues 1–23 (MASAKIFLIFLLAALIATPAAFA).

Post-translationally, probably covalently linked to cuticular lipids and/or trichome exudate diterpens or sugar esters in order to increase the solubility in exudate and the dispersion on the leaf surface. In terms of tissue distribution, expressed in small glandular secreting trichomes (SGTs).

It localises to the secreted. In terms of biological role, inhibits spore germination and leaf infection by fungal pathogens. The polypeptide is Phylloplanin (Nicotiana tabacum (Common tobacco)).